Here is a 450-residue protein sequence, read N- to C-terminus: Phosphoglucosamine mutase (450 aa).

The Phosphoserine intermediate role is filled by Ser101. Mg(2+) contacts are provided by Ser101, Asp240, Asp242, and Asp244. Ser101 carries the phosphoserine modification.

The protein belongs to the phosphohexose mutase family. Mg(2+) serves as cofactor. Post-translationally, activated by phosphorylation.

It catalyses the reaction alpha-D-glucosamine 1-phosphate = D-glucosamine 6-phosphate. Catalyzes the conversion of glucosamine-6-phosphate to glucosamine-1-phosphate. This chain is Phosphoglucosamine mutase, found in Streptococcus equi subsp. equi (strain 4047).